Consider the following 223-residue polypeptide: Large ribosomal subunit protein uL3 (223 aa).

A disordered region spans residues 137-157 (GRASHGNSRSHNVPGSIGMAQ). Gln157 carries the post-translational modification N5-methylglutamine.

Belongs to the universal ribosomal protein uL3 family. In terms of assembly, part of the 50S ribosomal subunit. Forms a cluster with proteins L14 and L19. Methylated by PrmB.

Functionally, one of the primary rRNA binding proteins, it binds directly near the 3'-end of the 23S rRNA, where it nucleates assembly of the 50S subunit. In Burkholderia pseudomallei (strain 1106a), this protein is Large ribosomal subunit protein uL3.